Here is an 80-residue protein sequence, read N- to C-terminus: 17 kDa surface antigen (80 aa).

The span at 47-58 shows a compositional bias: polar residues; that stretch reads ALETTPSGTSIE. Residues 47–80 form a disordered region; sequence ALETTPSGTSIEWRNPDNGNYGYVTPSKTYKNST.

The protein belongs to the rickettsiale 17 kDa surface antigen family.

The protein localises to the cell outer membrane. This Rickettsia canadensis protein is 17 kDa surface antigen (omp).